Reading from the N-terminus, the 375-residue chain is Transcription factor E2F4 (375 aa).

A DNA-binding region spans residues 12-81 (SRHEKSLGLL…KNSIQWKGVG (70 aa)). The segment at 39-61 (LKAAADTLAVRQKRRIYDITNVL) is leucine-zipper. Positions 44-81 (DTLAVRQKRRIYDITNVLEGIGLIEKKSKNSIQWKGVG) match the DEF box motif. The dimerization stretch occupies residues 82–177 (PGCNTREIAD…NTNGQKKFQI (96 aa)). The disordered stretch occupies residues 197-300 (SSAPVVVPVP…PDPSTSFQPI (104 aa)). A compositionally biased stretch (polar residues) spans 220 to 270 (STPQRPALTPQNDIATSPAPTVPHSTISNAESQDCPTGQTFSMENTTSSRL). Residues 280 to 296 (SSASLDNSNDSPDPSTS) are compositionally biased toward low complexity. The tract at residues 299 to 375 (PIKSDLSDVL…CDLFDVPINL (77 aa)) is transactivation.

This sequence belongs to the E2F/DP family. As to quaternary structure, component of the drtf1/e2f transcription factor complex. Component of the EDM complex, at least composed of e2f4, e2f5, mcidas and tfdp1.

It is found in the nucleus. Its function is as follows. Transcription activator that binds DNA cooperatively with DP proteins through the E2 recognition site, 5'-TTTC[CG]CGC-3' found in the promoter region of a number of genes. Component of the EDM complex, a complex specifically required for multiciliate cell differentiation: the EDM complex binds and activate genes required for centriole biogenesis. Activates genes required for centriole assembly (plk4, cep152) and genes specifically required for motile cilia formation (foxj1). Also promotes the deuterosome pathway of centriole biogenesis by activating expression of deup1, but not its paralog cep63. The sequence is that of Transcription factor E2F4 from Xenopus laevis (African clawed frog).